A 736-amino-acid chain; its full sequence is Sulfate transporter (736 aa).

The segment at methionine 1–arginine 28 is disordered. A phosphoserine mark is found at serine 12 and serine 16. A run of 2 helical transmembrane segments spans residues valine 114–leucine 134 and proline 139–serine 159. N-linked (GlcNAc...) asparagine glycans are attached at residues asparagine 201 and asparagine 207. Helical transmembrane passes span phenylalanine 229–tyrosine 249, glycine 257–leucine 277, leucine 380–valine 400, alanine 422–leucine 442, leucine 457–phenylalanine 477, and leucine 526–leucine 546. The STAS domain maps to alanine 570–alanine 721.

Belongs to the SLC26A/SulP transporter (TC 2.A.53) family. In terms of processing, N-glycosylated.

The protein resides in the cell membrane. The protein localises to the apical cell membrane. It carries out the reaction oxalate(in) + sulfate(out) = oxalate(out) + sulfate(in). The catalysed reaction is sulfate(out) + 2 chloride(in) = sulfate(in) + 2 chloride(out). The enzyme catalyses oxalate(out) + 2 chloride(in) = oxalate(in) + 2 chloride(out). It catalyses the reaction bromide(in) + chloride(out) = bromide(out) + chloride(in). It carries out the reaction nitrate(in) + chloride(out) = nitrate(out) + chloride(in). The catalysed reaction is iodide(in) + chloride(out) = iodide(out) + chloride(in). Its function is as follows. Sulfate transporter which mediates sulfate uptake into chondrocytes in order to maintain adequate sulfation of proteoglycans which is needed for cartilage development. Mediates electroneutral anion exchange of sulfate ions for oxalate ions, sulfate and oxalate ions for chloride and/or hydroxyl ions and chloride ions for bromide, iodide and nitrate ions. The coupling of sulfate transport to both hydroxyl and chloride ions likely serves to ensure transport at both acidic pH when most sulfate uptake is mediated by sulfate-hydroxide exchange and alkaline pH when most sulfate uptake is mediated by sulfate-chloride exchange. Essential for chondrocyte proliferation, differentiation and cell size expansion. This Equus caballus (Horse) protein is Sulfate transporter (SLC26A2).